We begin with the raw amino-acid sequence, 196 residues long: MLDRIKVCFTESIQTQIAAAEALPDAISRAAMTLVHSLLNGNKILCCGNGTSAANAQHFAASMINRFETERPSLPAIALNTDNVVLTAIANDRLHDEIYAKQVRALGHAGDVLLAISTRGNSRDIVKAVEAAVTRDMTIVALTGYDGGELAGLLGPQDVEIRIPSHHSARIQEMHMLTVNCLCDLIDNTLFPHQDD.

Residues 34–196 (LVHSLLNGNK…DNTLFPHQDD (163 aa)) form the SIS domain.

The protein belongs to the SIS family. DiaA subfamily. As to quaternary structure, homotetramer; dimer of dimers.

Required for the timely initiation of chromosomal replication via direct interactions with the DnaA initiator protein. The chain is DnaA initiator-associating protein DiaA from Citrobacter koseri (strain ATCC BAA-895 / CDC 4225-83 / SGSC4696).